The sequence spans 205 residues: uncharacterized protein (205 aa).

The signal sequence occupies residues 1-18 (MKASLALLSLLTAFTSHS).

This is an uncharacterized protein from Escherichia coli (strain K12).